We begin with the raw amino-acid sequence, 80 residues long: Small, acid-soluble spore protein Tlp (80 aa).

A compositionally biased stretch (basic and acidic residues) spans 34 to 73 (AKESMEFATDEEKQRIQEKNARRNESIESFRSEIQDESAA). Residues 34 to 80 (AKESMEFATDEEKQRIQEKNARRNESIESFRSEIQDESAARENGYQS) form a disordered region.

It belongs to the Tlp family.

Its subcellular location is the spore core. The protein is Small, acid-soluble spore protein Tlp of Bacillus velezensis (strain DSM 23117 / BGSC 10A6 / LMG 26770 / FZB42) (Bacillus amyloliquefaciens subsp. plantarum).